Reading from the N-terminus, the 216-residue chain is Probable inactive E3 ubiquitin-protein ligase SINAT6 (216 aa).

The segment at 5–74 (INDLQVESRV…LLLHLRNDHN (70 aa)) adopts an SIAH-type zinc-finger fold.

This sequence belongs to the SINA (Seven in absentia) family. As to quaternary structure, homodimer. Interacts with SINAT1, SINAT2, SINAT3, SINAT4 and SINAT5. Interacts with ATG6 and TRAF1A. Expressed in roots, rosette leaves, cauline leaves, guard cells and flowers.

It is found in the cytoplasm. Its subcellular location is the nucleus. Probable inactive E3 ubiquitin-protein ligase that plays a role in regulation of autophagy. Upon starvation, involved in maintaining ATG6 homeostasis by competitively associating with ATG6, a component of the autophagosome complex. Acts as a positive regulator of drought stress response. Functions as a positive regulator of abscisic acid-mediated stomatal closure. This is Probable inactive E3 ubiquitin-protein ligase SINAT6 from Arabidopsis thaliana (Mouse-ear cress).